The chain runs to 343 residues: tRNA N6-adenosine threonylcarbamoyltransferase (343 aa).

His-116 and His-120 together coordinate Fe cation. Residues 139–143, Asp-172, Gly-185, Asp-189, and Asn-280 each bind substrate; that span reads TVSGG. Residue Asp-308 coordinates Fe cation.

The protein belongs to the KAE1 / TsaD family. Requires Fe(2+) as cofactor.

Its subcellular location is the cytoplasm. The enzyme catalyses L-threonylcarbamoyladenylate + adenosine(37) in tRNA = N(6)-L-threonylcarbamoyladenosine(37) in tRNA + AMP + H(+). In terms of biological role, required for the formation of a threonylcarbamoyl group on adenosine at position 37 (t(6)A37) in tRNAs that read codons beginning with adenine. Is involved in the transfer of the threonylcarbamoyl moiety of threonylcarbamoyl-AMP (TC-AMP) to the N6 group of A37, together with TsaE and TsaB. TsaD likely plays a direct catalytic role in this reaction. This is tRNA N6-adenosine threonylcarbamoyltransferase from Cytophaga hutchinsonii (strain ATCC 33406 / DSM 1761 / CIP 103989 / NBRC 15051 / NCIMB 9469 / D465).